We begin with the raw amino-acid sequence, 456 residues long: Adenylosuccinate synthetase isozyme 2 (456 aa).

A disordered region spans residues 1–24 (MAFAETNPAASSLPNGDCGRPRAR). GTP contacts are provided by residues 39-45 (GDEGKGK) and 67-69 (GHT). Asp-40 functions as the Proton acceptor in the catalytic mechanism. Positions 40 and 67 each coordinate Mg(2+). Asp-40 is a binding site for substrate. IMP contacts are provided by residues 40 to 43 (DEGK), 65 to 68 (NAGH), Thr-162, Arg-176, Asn-255, Thr-270, and Arg-334. His-68 serves as the catalytic Proton donor. 330–336 (VTTGRKR) contacts substrate. GTP is bound by residues Arg-336, 362–364 (KLD), and 444–447 (GVGK).

Belongs to the adenylosuccinate synthetase family. In terms of assembly, homodimer. Mg(2+) is required as a cofactor. As to expression, widely expressed.

The protein resides in the cytoplasm. It is found in the mitochondrion. It carries out the reaction IMP + L-aspartate + GTP = N(6)-(1,2-dicarboxyethyl)-AMP + GDP + phosphate + 2 H(+). The protein operates within purine metabolism; AMP biosynthesis via de novo pathway; AMP from IMP: step 1/2. Its activity is regulated as follows. Inhibited competitively by AMP and IMP and non-competitively by fructose 1,6-bisphosphate. In terms of biological role, plays an important role in the de novo pathway and in the salvage pathway of purine nucleotide biosynthesis. Catalyzes the first committed step in the biosynthesis of AMP from IMP. This Sus scrofa (Pig) protein is Adenylosuccinate synthetase isozyme 2.